Consider the following 551-residue polypeptide: Membrane protein insertase YidC (551 aa).

A helical membrane pass occupies residues Ala3–Gly23. A compositionally biased stretch (polar residues) spans Asn33–Tyr47. Residues Asn33–Thr59 form a disordered region. The span at Ala50–Thr59 shows a compositional bias: low complexity. 3 helical membrane-spanning segments follow: residues Leu361–Tyr381, Leu431–Leu451, and Val504–Val524.

The protein belongs to the OXA1/ALB3/YidC family. Type 1 subfamily. Interacts with the Sec translocase complex via SecD. Specifically interacts with transmembrane segments of nascent integral membrane proteins during membrane integration.

The protein localises to the cell inner membrane. Functionally, required for the insertion and/or proper folding and/or complex formation of integral membrane proteins into the membrane. Involved in integration of membrane proteins that insert both dependently and independently of the Sec translocase complex, as well as at least some lipoproteins. Aids folding of multispanning membrane proteins. The protein is Membrane protein insertase YidC of Francisella tularensis subsp. tularensis (strain SCHU S4 / Schu 4).